The primary structure comprises 147 residues: Myoglobin (147 aa).

Positions 2-141 constitute a Globin domain; that stretch reads ADFDMVLKCW…IIADMEADYK (140 aa). His60 serves as a coordination point for nitrite. Position 60 (His60) interacts with O2. A heme b-binding site is contributed by His89.

It belongs to the globin family. In terms of assembly, monomeric.

It is found in the cytoplasm. The protein resides in the sarcoplasm. It carries out the reaction Fe(III)-heme b-[protein] + nitric oxide + H2O = Fe(II)-heme b-[protein] + nitrite + 2 H(+). The enzyme catalyses H2O2 + AH2 = A + 2 H2O. In terms of biological role, monomeric heme protein which primary function is to store oxygen and facilitate its diffusion within muscle tissues. Reversibly binds oxygen through a pentacoordinated heme iron and enables its timely and efficient release as needed during periods of heightened demand. Depending on the oxidative conditions of tissues and cells, and in addition to its ability to bind oxygen, it also has a nitrite reductase activity whereby it regulates the production of bioactive nitric oxide. Under stress conditions, like hypoxia and anoxia, it also protects cells against reactive oxygen species thanks to its pseudoperoxidase activity. This chain is Myoglobin (mb), found in Pseudochaenichthys georgianus (South Georgia icefish).